The following is a 312-amino-acid chain: Protein-methionine-sulfoxide reductase catalytic subunit MsrP (312 aa).

Residues 1–47 constitute a signal peptide (tat-type signal); that stretch reads MLIRRPPDLLPSEITPEPLARGRRALLKGLGAGAALAGLGLPQISQA. Mo-molybdopterin is bound by residues Asn74, 77-78, Cys133, Thr168, Asn216, Arg221, and 232-234; these read YE and SAK.

It belongs to the MsrP family. Heterodimer of a catalytic subunit (MsrP) and a heme-binding subunit (MsrQ). Requires Mo-molybdopterin as cofactor. Predicted to be exported by the Tat system. The position of the signal peptide cleavage has not been experimentally proven.

It is found in the periplasm. It catalyses the reaction L-methionyl-[protein] + a quinone + H2O = L-methionyl-(R)-S-oxide-[protein] + a quinol. Functionally, part of the MsrPQ system that repairs oxidized periplasmic proteins containing methionine sulfoxide residues (Met-O), using respiratory chain electrons. Thus protects these proteins from oxidative-stress damage caused by reactive species of oxygen and chlorine generated by the host defense mechanisms. MsrPQ is essential for the maintenance of envelope integrity under bleach stress, rescuing a wide series of structurally unrelated periplasmic proteins from methionine oxidation. The catalytic subunit MsrP is non-stereospecific, being able to reduce both (R-) and (S-) diastereoisomers of methionine sulfoxide. Involved in protection against reactive chlorine species (RCS) generated by chlorite and hypochlorite. The chain is Protein-methionine-sulfoxide reductase catalytic subunit MsrP from Azospira oryzae (strain ATCC BAA-33 / DSM 13638 / PS) (Dechlorosoma suillum).